The primary structure comprises 134 residues: Small ribosomal subunit protein uS8 (134 aa).

Belongs to the universal ribosomal protein uS8 family. Part of the 30S ribosomal subunit. Contacts proteins S5 and S12.

In terms of biological role, one of the primary rRNA binding proteins, it binds directly to 16S rRNA central domain where it helps coordinate assembly of the platform of the 30S subunit. In Fervidobacterium nodosum (strain ATCC 35602 / DSM 5306 / Rt17-B1), this protein is Small ribosomal subunit protein uS8.